The following is a 1555-amino-acid chain: Protein TASOR (1555 aa).

5 disordered regions span residues 1-74 (MEEN…DKRA), 645-711 (QKKK…RQET), 744-773 (QNST…GQDQ), 870-911 (ALPN…TTPS), and 1390-1462 (NQGD…PTLD). Over residues 35-47 (VQQTLKRTNSTES) the composition is skewed to polar residues. Residues 61-71 (RRFQIPRKSRD) are compositionally biased toward basic residues. Basic and acidic residues predominate over residues 667–688 (DRQSEKAWKHRKCEENVHHDNE). 2 stretches are compositionally biased toward polar residues: residues 692-702 (SAQSLISSLGG) and 744-761 (QNST…LSQA). The segment covering 888 to 904 (PLHETERQRPRHDRDYC) has biased composition (basic and acidic residues). Over residues 1402 to 1417 (SKEEEDMSLDSEDDTP) the composition is skewed to acidic residues. The segment covering 1448–1458 (ESPSTLNQGKT) has biased composition (polar residues).

The protein belongs to the TASOR family. As to quaternary structure, component of the HUSH complex.

It is found in the nucleus. Its subcellular location is the chromosome. Functionally, component of the HUSH complex, a multiprotein complex that mediates epigenetic repression. The HUSH complex is recruited to genomic loci rich in H3K9me3 and is probably required to maintain transcriptional silencing by promoting further deposition of H3K9me3. The protein is Protein TASOR of Xenopus laevis (African clawed frog).